The sequence spans 282 residues: RsbT co-antagonist protein RsbRC (282 aa).

Residues serine 165 and serine 174 each carry the phosphoserine modification. The 112-residue stretch at 165 to 276 (SAPVIVLFHS…STLASAIASD (112 aa)) folds into the STAS domain. At threonine 186 the chain carries Phosphothreonine.

As to quaternary structure, probably present in the stressosome with RsbRA, RsbRB, RsbRD and RsbS. In terms of processing, phosphorylated by RsbT.

Functionally, one of 4 functionally non-identical RsbR paralogs, it functions in the environmental signaling branch of the general stress response. Negative regulator of sigma-B activity. Non-phosphorylated RsbS binds to RsbT, preventing its association with RsbU. Requires any one of RsbRA, RsbRB, RsbRC or RsbRD to sequester RsbT. When RsbS and the RsbR paralog(s) are phosphorylated, they release RsbT, which can then bind and activate RsbU. The chain is RsbT co-antagonist protein RsbRC (rsbRC) from Bacillus subtilis (strain 168).